The sequence spans 148 residues: Transcriptional repressor NrdR (148 aa).

Residues 3 to 34 fold into a zinc finger; the sequence is CPFCHNEDTQVLDTRVSDEGDTIRRRRRCAKC. Residues 49-139 enclose the ATP-cone domain; sequence PAIVKKNGSR…VYRSFADIES (91 aa).

This sequence belongs to the NrdR family. It depends on Zn(2+) as a cofactor.

In terms of biological role, negatively regulates transcription of bacterial ribonucleotide reductase nrd genes and operons by binding to NrdR-boxes. This Polynucleobacter necessarius subsp. necessarius (strain STIR1) protein is Transcriptional repressor NrdR.